The following is a 503-amino-acid chain: Maturase K (503 aa).

This sequence belongs to the intron maturase 2 family. MatK subfamily.

The protein resides in the plastid. Its subcellular location is the chloroplast. Functionally, usually encoded in the trnK tRNA gene intron. Probably assists in splicing its own and other chloroplast group II introns. This Rosa foetida (Austrian briar) protein is Maturase K.